Consider the following 63-residue polypeptide: uncharacterized protein (63 aa).

This is an uncharacterized protein from Acidianus bottle-shaped virus (isolate Italy/Pozzuoli) (ABV).